We begin with the raw amino-acid sequence, 574 residues long: ESX-1 secretion system protein EccA1 (574 aa).

An ATP-binding site is contributed by 335–342 (GPPGTGKT).

It belongs to the CbxX/CfxQ family. As to quaternary structure, part of the ESX-1 / type VII secretion system (T7SS), which is composed of cytosolic and membrane components.

The protein localises to the cytoplasm. Functionally, part of the ESX-1 / type VII specialized secretion system (T7SS), which exports several proteins including EsxA and EsxB. Plays a role in DNA conjugation, in both donor and recipient strains. EccA1 exhibits ATPase activity and may provide energy for the export of ESX-1 substrates. The protein is ESX-1 secretion system protein EccA1 of Mycolicibacterium smegmatis (strain ATCC 700084 / mc(2)155) (Mycobacterium smegmatis).